A 193-amino-acid chain; its full sequence is Probable nicotinate-nucleotide adenylyltransferase (193 aa).

This sequence belongs to the NadD family.

It catalyses the reaction nicotinate beta-D-ribonucleotide + ATP + H(+) = deamido-NAD(+) + diphosphate. It functions in the pathway cofactor biosynthesis; NAD(+) biosynthesis; deamido-NAD(+) from nicotinate D-ribonucleotide: step 1/1. Functionally, catalyzes the reversible adenylation of nicotinate mononucleotide (NaMN) to nicotinic acid adenine dinucleotide (NaAD). This Endomicrobium trichonymphae protein is Probable nicotinate-nucleotide adenylyltransferase.